We begin with the raw amino-acid sequence, 262 residues long: Conserved oligomeric Golgi complex subunit 2 (262 aa).

As to quaternary structure, component of the conserved oligomeric Golgi (COG or Sec34/Sec35) complex which consists of eight different proteins COG1-COG8. The COG complex interacts with the Rab GTPase YPT1, the Glogi SNAREs GOS1, SEC22, SED5, VTI1 and YKT6 and the COPI coatomer subunit gamma SEC21.

The protein localises to the golgi apparatus membrane. Its function is as follows. Acts as a component of the peripheral membrane COG complex that is involved in intra-Golgi protein trafficking. COG is located at the cis-Golgi, and regulates tethering of retrograde intra-Golgi vesicles and possibly a number of other membrane trafficking events. COG2 is required for ER to Golgi vesicle docking. Not essential for viability. The chain is Conserved oligomeric Golgi complex subunit 2 (COG2) from Saccharomyces cerevisiae (strain ATCC 204508 / S288c) (Baker's yeast).